A 131-amino-acid polypeptide reads, in one-letter code: Histone H2B (131 aa).

The span at 1–19 (MAPKAEKKPASKAPAEKKP) shows a compositional bias: basic and acidic residues. A disordered region spans residues 1–38 (MAPKAEKKPASKAPAEKKPAAKKTASSTDGGKKRTKAR). Residues lysine 7 and lysine 8 each carry the N6-acetyllysine; alternate modification. Glycyl lysine isopeptide (Lys-Gly) (interchain with G-Cter in SUMO); alternate cross-links involve residues lysine 7 and lysine 8. Phosphoserine is present on serine 11. N6-acetyllysine is present on lysine 12. Residue lysine 17 is modified to N6-acetyllysine; alternate. Lysine 17 participates in a covalent cross-link: Glycyl lysine isopeptide (Lys-Gly) (interchain with G-Cter in SUMO); alternate. Residue lysine 18 forms a Glycyl lysine isopeptide (Lys-Gly) (interchain with G-Cter in SUMO) linkage. A Glycyl lysine isopeptide (Lys-Gly) (interchain with G-Cter in ubiquitin) cross-link involves residue lysine 125.

The protein belongs to the histone H2B family. In terms of assembly, the nucleosome is a histone octamer containing two molecules each of H2A, H2B, H3 and H4 assembled in one H3-H4 heterotetramer and two H2A-H2B heterodimers. The octamer wraps approximately 147 bp of DNA. Monoubiquitinated by the UBC2-BRE1 complex to form H2BK123ub1. H2BK123ub1 gives a specific tag for epigenetic transcriptional activation and is also prerequisite for H3K4me and H3K79me formation. H2BK123ub1 also modulates the formation of double-strand breaks during meiosis and is a prerequisite for DNA-damage checkpoint activation. In terms of processing, phosphorylated by STE20 to form H2BS10ph during progression through meiotic prophase. May be correlated with chromosome condensation. Post-translationally, acetylated by GCN5 to form H2BK11ac and H2BK16ac. H2BK16ac can also be formed by ESA1. Acetylation of N-terminal lysines and particularly formation of H2BK11acK16ac has a positive effect on transcription. Sumoylation to form H2BK6su or H2BK7su, and probably also H2BK16su or H2BK17su, occurs preferentially near the telomeres and represses gene transcription.

It localises to the nucleus. The protein resides in the chromosome. Its function is as follows. Core component of nucleosome. Nucleosomes wrap and compact DNA into chromatin, limiting DNA accessibility to the cellular machineries which require DNA as a template. Histones thereby play a central role in transcription regulation, DNA repair, DNA replication and chromosomal stability. DNA accessibility is regulated via a complex set of post-translational modifications of histones, also called histone code, and nucleosome remodeling. The protein is Histone H2B (HTB1) of Lodderomyces elongisporus (strain ATCC 11503 / CBS 2605 / JCM 1781 / NBRC 1676 / NRRL YB-4239) (Yeast).